A 502-amino-acid polypeptide reads, in one-letter code: Xylan O-acetyltransferase 13 (502 aa).

Over 1-53 (MWSALFSHLREVHKRSGVKEEKLIMKSPPAAGEAGCHKPQATATNKMTVLQSP) the chain is Cytoplasmic. Residues 54-76 (LGLRTILTSLVAFFIVVSSVSLL) traverse the membrane as a helical; Signal-anchor for type II membrane protein segment. Topologically, residues 77 to 502 (FDRGQDAQAQ…EFLYAYIMHK (426 aa)) are lumenal. Disulfide bonds link Cys152–Cys203, Cys174–Cys239, Cys183–Cys483, and Cys399–Cys479. Residues Asn153, Asn163, Asn189, and Asn209 are each glycosylated (N-linked (GlcNAc...) asparagine). A GDS motif motif is present at residues 226–228 (GDS). Ser228 serves as the catalytic Nucleophile. 5 N-linked (GlcNAc...) asparagine glycosylation sites follow: Asn255, Asn267, Asn372, Asn401, and Asn442. Asp478 serves as the catalytic Proton donor. The short motif at 478-481 (DCTH) is the DXXH motif element. His481 functions as the Proton acceptor in the catalytic mechanism.

The protein belongs to the PC-esterase family. TBL subfamily.

Its subcellular location is the golgi apparatus membrane. Xylan acetyltransferase required for 2-O- and 3-O-monoacetylation of xylosyl residues in xylan. Catalyzes the 2-O-acetylation of xylan, followed by nonenzymatic acetyl migration to the O-3 position, resulting in products that are monoacetylated at both O-2 and O-3 positions. This Oryza sativa subsp. japonica (Rice) protein is Xylan O-acetyltransferase 13.